Reading from the N-terminus, the 376-residue chain is Methionine import ATP-binding protein MetN 1 (376 aa).

Residues 34 to 273 (VRFINLGKTY…PQHEVSKTLL (240 aa)) form the ABC transporter domain. Residue 70 to 77 (GRSGAGKS) participates in ATP binding.

It belongs to the ABC transporter superfamily. Methionine importer (TC 3.A.1.24) family. As to quaternary structure, the complex is composed of two ATP-binding proteins (MetN), two transmembrane proteins (MetI) and a solute-binding protein (MetQ).

The protein resides in the cell inner membrane. The catalysed reaction is L-methionine(out) + ATP + H2O = L-methionine(in) + ADP + phosphate + H(+). It catalyses the reaction D-methionine(out) + ATP + H2O = D-methionine(in) + ADP + phosphate + H(+). Functionally, part of the ABC transporter complex MetNIQ involved in methionine import. Responsible for energy coupling to the transport system. The protein is Methionine import ATP-binding protein MetN 1 of Pseudomonas syringae pv. tomato (strain ATCC BAA-871 / DC3000).